The primary structure comprises 74 residues: ATP synthase subunit c (74 aa).

2 helical membrane passes run 9–29 (IGAG…GNIF) and 54–74 (FALT…ILFV).

This sequence belongs to the ATPase C chain family. In terms of assembly, F-type ATPases have 2 components, F(1) - the catalytic core - and F(0) - the membrane proton channel. F(1) has five subunits: alpha(3), beta(3), gamma(1), delta(1), epsilon(1). F(0) has three main subunits: a(1), b(2) and c(10-14). The alpha and beta chains form an alternating ring which encloses part of the gamma chain. F(1) is attached to F(0) by a central stalk formed by the gamma and epsilon chains, while a peripheral stalk is formed by the delta and b chains.

It is found in the cell inner membrane. Functionally, f(1)F(0) ATP synthase produces ATP from ADP in the presence of a proton or sodium gradient. F-type ATPases consist of two structural domains, F(1) containing the extramembraneous catalytic core and F(0) containing the membrane proton channel, linked together by a central stalk and a peripheral stalk. During catalysis, ATP synthesis in the catalytic domain of F(1) is coupled via a rotary mechanism of the central stalk subunits to proton translocation. Key component of the F(0) channel; it plays a direct role in translocation across the membrane. A homomeric c-ring of between 10-14 subunits forms the central stalk rotor element with the F(1) delta and epsilon subunits. The chain is ATP synthase subunit c from Gluconacetobacter diazotrophicus (strain ATCC 49037 / DSM 5601 / CCUG 37298 / CIP 103539 / LMG 7603 / PAl5).